We begin with the raw amino-acid sequence, 1145 residues long: Cellulose synthase-like protein D3 (1145 aa).

The span at 1–19 (MASNNHFMNSRSNLSTNSD) shows a compositional bias: polar residues. 2 disordered regions span residues 1-38 (MASNNHFMNSRSNLSTNSDAAEAERHQQPVSNSVTFAR) and 189-208 (DNNKQQRPMLPPPAGGSKMD). Helical transmembrane passes span 289–309 (VISPYRLLILIRIVVLALFLM) and 319–339 (AIWLWGMSVVCELWFALSWLL). Aspartate 419 is an active-site residue. Position 755 is a phosphoserine (serine 755). Aspartate 848 is a catalytic residue. The next 6 helical transmembrane spans lie at 930-950 (FFLIVYCFLPALSLFSGQFIV), 956-976 (TFLVYLLIISITLCLLALLEI), 1002-1022 (LAAVIQGLLKVVAGIEISFTL), 1045-1065 (SLMIPPITIMMVNLIAIAVGF), 1079-1099 (LIGGVFFSFWVLAHLYPFAKG), and 1109-1129 (TIVYVWSGLVAITISLLWVAI).

Belongs to the glycosyltransferase 2 family. Plant cellulose synthase-like D subfamily. In terms of tissue distribution, preferentially expressed in root hair cells. Expressed in roots, leaves, stems, flowers and siliques.

Its subcellular location is the golgi apparatus membrane. Its function is as follows. Thought to be a Golgi-localized beta-glycan synthase that polymerize the backbones of noncellulosic polysaccharides (hemicelluloses) of plant cell wall. Required for synthesis of a cell wall polysaccharide essential for root hair elongation, but not initiation. May be the functional ortholog of rice CSLD1. The polypeptide is Cellulose synthase-like protein D3 (CSLD3) (Arabidopsis thaliana (Mouse-ear cress)).